A 314-amino-acid polypeptide reads, in one-letter code: MALVDETSIDEAGFRMSEATAGDFFALLKPRVMSLVVFTAFVGLVAAPVTINPLLAVIAILSIAIGAGASGALNMWYDADIDAVMTRTASRPVPSGRIQPHEALSFGLVLSVLSVMTLGVLVNWLSATLLAFTIFFYAVVYTMWLKRWTPQNIVIGGAAGAIPPVIGWAAVTGSVSLESIVLFLIIFLWTPPHFWALALFKSGDYERAGIPMMPNVAGHASTRRQIFAYALVLAPVGVAPWLLGYTTPFYGVAAMLLGLGFVWYAWKVLGMADDDRAMKPAKALFAYSLLYLFAIFAAYLADSVVERALAMGGA.

The next 9 helical transmembrane spans lie at 32 to 49 (VMSL…AAPV), 54 to 76 (LLAV…LNMW), 98 to 118 (IQPH…VMTL), 120 to 140 (VLVN…YAVV), 153 to 173 (IVIG…AVTG), 180 to 200 (IVLF…LALF), 226 to 246 (IFAY…LGYT), 249 to 269 (FYGV…WKVL), and 285 to 305 (FAYS…DSVV).

Belongs to the UbiA prenyltransferase family. Protoheme IX farnesyltransferase subfamily.

It localises to the cell inner membrane. The enzyme catalyses heme b + (2E,6E)-farnesyl diphosphate + H2O = Fe(II)-heme o + diphosphate. Its pathway is porphyrin-containing compound metabolism; heme O biosynthesis; heme O from protoheme: step 1/1. Converts heme B (protoheme IX) to heme O by substitution of the vinyl group on carbon 2 of heme B porphyrin ring with a hydroxyethyl farnesyl side group. This chain is Protoheme IX farnesyltransferase 2, found in Mesorhizobium japonicum (strain LMG 29417 / CECT 9101 / MAFF 303099) (Mesorhizobium loti (strain MAFF 303099)).